The sequence spans 182 residues: uncharacterized protein (182 aa).

A helical membrane pass occupies residues 17-34 (LSLVLFAVLSVLPLGGCA). 2 TPR repeats span residues 89–122 (VDAA…TPDN) and 123–156 (LRAL…NPEN).

It is found in the membrane. This is an uncharacterized protein from Sinorhizobium fredii (strain NBRC 101917 / NGR234).